Here is a 26-residue protein sequence, read N- to C-terminus: U1-poneritoxin-Ni1b (26 aa).

The protein belongs to the non-disulfide-bridged peptide (NDBP) superfamily. Medium-length antimicrobial peptide (group 3) family. Ponericin-W subfamily. As to expression, expressed by the venom gland.

It localises to the secreted. It is found in the target cell membrane. Functionally, has a broad spectrum of activity against both Gram-positive and Gram-negative bacteria and S.cerevisiae. Has insecticidal and hemolytic activities. May act by disrupting the integrity of the bacterial cell membrane. In Neoponera inversa (Ant), this protein is U1-poneritoxin-Ni1b.